The primary structure comprises 380 residues: Cytochrome b (380 aa).

4 helical membrane passes run 34–54 (FGSL…LLAM), 78–99 (WLIR…FLHI), 114–134 (WNTG…GYVL), and 179–199 (FFAL…IHLT). Heme b-binding residues include histidine 84 and histidine 98. Heme b-binding residues include histidine 183 and histidine 197. An a ubiquinone-binding site is contributed by histidine 202. Transmembrane regions (helical) follow at residues 227 to 247 (LKDI…ALFS), 289 to 309 (LGGV…PFLH), 321 to 341 (LSQI…WIGS), and 348 to 368 (FIII…ILFP).

The protein belongs to the cytochrome b family. The cytochrome bc1 complex contains 11 subunits: 3 respiratory subunits (MT-CYB, CYC1 and UQCRFS1), 2 core proteins (UQCRC1 and UQCRC2) and 6 low-molecular weight proteins (UQCRH/QCR6, UQCRB/QCR7, UQCRQ/QCR8, UQCR10/QCR9, UQCR11/QCR10 and a cleavage product of UQCRFS1). This cytochrome bc1 complex then forms a dimer. Heme b serves as cofactor.

It localises to the mitochondrion inner membrane. In terms of biological role, component of the ubiquinol-cytochrome c reductase complex (complex III or cytochrome b-c1 complex) that is part of the mitochondrial respiratory chain. The b-c1 complex mediates electron transfer from ubiquinol to cytochrome c. Contributes to the generation of a proton gradient across the mitochondrial membrane that is then used for ATP synthesis. The polypeptide is Cytochrome b (MT-CYB) (Polyplectron bicalcaratum (Grey peacock-pheasant)).